The primary structure comprises 396 residues: 8-amino-7-oxononanoate synthase (396 aa).

Arg19 is a binding site for substrate. 106–107 (GY) provides a ligand contact to pyridoxal 5'-phosphate. Substrate is bound at residue His131. Pyridoxal 5'-phosphate is bound by residues Ser176, His204, and Thr233. At Lys236 the chain carries N6-(pyridoxal phosphate)lysine. Thr350 lines the substrate pocket.

This sequence belongs to the class-II pyridoxal-phosphate-dependent aminotransferase family. BioF subfamily. In terms of assembly, homodimer. It depends on pyridoxal 5'-phosphate as a cofactor.

It catalyses the reaction 6-carboxyhexanoyl-[ACP] + L-alanine + H(+) = (8S)-8-amino-7-oxononanoate + holo-[ACP] + CO2. It functions in the pathway cofactor biosynthesis; biotin biosynthesis. Catalyzes the decarboxylative condensation of pimeloyl-[acyl-carrier protein] and L-alanine to produce 8-amino-7-oxononanoate (AON), [acyl-carrier protein], and carbon dioxide. The sequence is that of 8-amino-7-oxononanoate synthase from Pseudomonas syringae pv. tomato (strain ATCC BAA-871 / DC3000).